Here is a 647-residue protein sequence, read N- to C-terminus: Sialidase (647 aa).

A signal peptide spans 1-37; that stretch reads MTANPYLRRLPRRRAVSFLLAPALAAATVAGASPAQA. Residue R68 participates in substrate binding. The Proton acceptor role is filled by D92. BNR repeat units follow at residues 102 to 113, 175 to 186, and 239 to 250; these read RRSTDGGRTWGE, ATSTDGGLTWSH, and VYSDDHGRTWRA. Residue E260 is the Nucleophile of the active site. R276 contributes to the substrate binding site. 2 BNR repeats span residues 287–298 and 348–359; these read AVSTDGGHSYGP and RMSCDDGQTWPV. Catalysis depends on Y370, which acts as the Nucleophile. The region spanning 496-646 is the F5/8 type C domain; that stretch reads TFTVTVGLLD…AVAELEVEGQ (151 aa).

It belongs to the glycosyl hydrolase 33 family.

It localises to the secreted. It carries out the reaction Hydrolysis of alpha-(2-&gt;3)-, alpha-(2-&gt;6)-, alpha-(2-&gt;8)- glycosidic linkages of terminal sialic acid residues in oligosaccharides, glycoproteins, glycolipids, colominic acid and synthetic substrates.. Its function is as follows. To release sialic acids for use as carbon and energy sources for this non-pathogenic bacterium while in pathogenic microorganisms, sialidases have been suggested to be pathogenic factors. The chain is Sialidase (nedA) from Micromonospora viridifaciens.